Consider the following 261-residue polypeptide: Thiamine thiazole synthase (261 aa).

NAD(+) contacts are provided by residues Ser-40, 59-60 (ER), Gly-67, Val-133, and 159-161 (HID). The Fe cation site is built by Asp-161 and His-176. NAD(+) is bound by residues Ser-179 and Met-226. Position 236 (Arg-236) interacts with glycine.

It belongs to the THI4 family. Homooctamer; tetramer of dimers. Fe(2+) serves as cofactor.

The catalysed reaction is hydrogen sulfide + glycine + NAD(+) = ADP-5-ethyl-4-methylthiazole-2-carboxylate + nicotinamide + 3 H2O + H(+). The protein operates within cofactor biosynthesis; thiamine diphosphate biosynthesis. Involved in the biosynthesis of the thiazole moiety of thiamine. Catalyzes the conversion of NAD and glycine to adenosine diphosphate 5-(2-hydroxyethyl)-4-methylthiazole-2-carboxylate (ADT), an adenylated thiazole intermediate, using free sulfide as a source of sulfur. In Methanococcus maripaludis (strain C6 / ATCC BAA-1332), this protein is Thiamine thiazole synthase.